Here is a 159-residue protein sequence, read N- to C-terminus: MMFGFGLLKQYAGTTEQISTAAEALVGRSTTLTEALKAAAINVGRKPVETTDLAAIKEVEARAIGGDIESDGGVTAVASKAVARNQKIGEDNEKTNLGDVIAEIDVKVTRDREVTSEDAEAVIRAELNHSPFNNIIPGGVAESVTAAYKLNCNPCNVSL.

2 SMP domains span residues 30–87 and 96–151; these read TTLT…RNQK and NLGD…YKLN.

The protein belongs to the LEA type SMP family.

It is found in the cytoplasm. Its subcellular location is the nucleus. Functionally, LEA proteins are late embryonic proteins abundant in higher plant seed embryos. The function of those proteins is not known. The protein is Late embryogenesis abundant protein 50 of Arabidopsis thaliana (Mouse-ear cress).